A 70-amino-acid chain; its full sequence is Large ribosomal subunit protein uL30 (70 aa).

The protein belongs to the universal ribosomal protein uL30 family. In terms of assembly, part of the 50S ribosomal subunit.

In Renibacterium salmoninarum (strain ATCC 33209 / DSM 20767 / JCM 11484 / NBRC 15589 / NCIMB 2235), this protein is Large ribosomal subunit protein uL30.